The following is a 430-amino-acid chain: Adenylosuccinate synthetase (430 aa).

GTP is bound by residues 12 to 18 (GDEGKGK) and 40 to 42 (GHT). The active-site Proton acceptor is the D13. Mg(2+)-binding residues include D13 and G40. Residues 13 to 16 (DEGK), 38 to 41 (NAGH), T128, R142, Q223, T238, and R302 contribute to the IMP site. H41 functions as the Proton donor in the catalytic mechanism. 298–304 (TTTGRPR) lines the substrate pocket. Residues R304, 330–332 (SID), and 412–414 (SVG) contribute to the GTP site.

This sequence belongs to the adenylosuccinate synthetase family. In terms of assembly, homodimer. The cofactor is Mg(2+).

The protein localises to the cytoplasm. The enzyme catalyses IMP + L-aspartate + GTP = N(6)-(1,2-dicarboxyethyl)-AMP + GDP + phosphate + 2 H(+). It functions in the pathway purine metabolism; AMP biosynthesis via de novo pathway; AMP from IMP: step 1/2. Plays an important role in the de novo pathway of purine nucleotide biosynthesis. Catalyzes the first committed step in the biosynthesis of AMP from IMP. This Streptococcus pyogenes serotype M1 protein is Adenylosuccinate synthetase.